Here is a 302-residue protein sequence, read N- to C-terminus: Adipolin (302 aa).

Positions 1-20 (MRRWAWAAVVVLLGPQLVLL) are cleaved as a signal peptide. 2 disordered regions span residues 28–68 (EAQR…GPEF) and 86–110 (ALRK…PPGA). The N-linked (GlcNAc...) asparagine glycan is linked to Asn-43. A compositionally biased stretch (basic and acidic residues) spans 86–100 (ALRKRCGSRDKKPRD). The region spanning 147–302 (LRLVGEAFHC…SSFSGLLLGT (156 aa)) is the C1q domain.

The protein belongs to the adipolin/erythroferrone family. In terms of assembly, homomultimer; disulfide-linked. May interact with ERFE. Post-translationally, processed into Adipolin fC1QTNF12 and Adipolin gC1QTNF12 by FURIN. Insulin enhances endogenous C1QTNF12 cleavage. As to expression, predominantly expressed by adipose tissues.

The protein localises to the secreted. Functionally, insulin-sensitizing adipocyte-secreted protein (adipokine) that regulates glucose metabolism in liver and adipose tissue. Promotes glucose uptake in adipocytes and suppresses de novo glucose production in hepatocytes via the PI3K-Akt signaling pathway. Administration lead to reduction of blood glucose. Able to attenuate inflammation in fat tissue. This is Adipolin from Homo sapiens (Human).